We begin with the raw amino-acid sequence, 215 residues long: Cytochrome b6 (215 aa).

A helical membrane pass occupies residues 32–52 (IFYCFGGITFTCFLVQVATGF). Cysteine 35 contacts heme c. Heme b-binding residues include histidine 86 and histidine 100. Transmembrane regions (helical) follow at residues 90-110 (ASMM…TGGF), 116-136 (LTWV…VTGY), and 186-206 (LHTF…FLMI). Histidine 187 and histidine 202 together coordinate heme b.

The protein belongs to the cytochrome b family. PetB subfamily. The 4 large subunits of the cytochrome b6-f complex are cytochrome b6, subunit IV (17 kDa polypeptide, PetD), cytochrome f and the Rieske protein, while the 4 small subunits are PetG, PetL, PetM and PetN. The complex functions as a dimer. Heme b is required as a cofactor. It depends on heme c as a cofactor.

The protein resides in the plastid. It localises to the chloroplast thylakoid membrane. Component of the cytochrome b6-f complex, which mediates electron transfer between photosystem II (PSII) and photosystem I (PSI), cyclic electron flow around PSI, and state transitions. The polypeptide is Cytochrome b6 (Auxenochlorella protothecoides (Green microalga)).